The primary structure comprises 88 residues: MGFTDETVRFNLDDSNKKEISETLTDVYTSLNEKGYNPINQIVGYVLSGDPAYVPRYNNARNQIRKYERDEIVEELVRYYLKGQGIDL.

It belongs to the UPF0297 family.

This Streptococcus gordonii (strain Challis / ATCC 35105 / BCRC 15272 / CH1 / DL1 / V288) protein is UPF0297 protein SGO_2042.